The primary structure comprises 195 residues: Probable GTP-binding protein EngB (195 aa).

One can recognise an EngB-type G domain in the interval 22–195; the sequence is GRPEVALAGR…WAALLPFLTE (174 aa). Residues 30–37, 57–61, 75–78, 142–145, and 174–176 contribute to the GTP site; these read GRSNVGKS, GKTQT, DVPG, TKAD, and FSS. Positions 37 and 59 each coordinate Mg(2+).

It belongs to the TRAFAC class TrmE-Era-EngA-EngB-Septin-like GTPase superfamily. EngB GTPase family. It depends on Mg(2+) as a cofactor.

Its function is as follows. Necessary for normal cell division and for the maintenance of normal septation. In Geobacillus thermodenitrificans (strain NG80-2), this protein is Probable GTP-binding protein EngB.